Here is a 1612-residue protein sequence, read N- to C-terminus: MPSKTICDQVIPPNVRDRVQELDGDLNDGLITEKGYVKKKSKILFEHLSPDIQTKLKGLEDELKDEELTEKGYLNKVQSILAKFIETCSPVNGDTKEEASSNGKDDEKAESTVANGTTSNGSTTNGSSGSSKANGHTNGGYVQSSSQEETGTSQSEEEMDMDTPTSGKGGSKKKKKSKGSGGGDAGKGRKRKVLGDDERDGVEKKEGEKKDVEGEEGEEAKEESATPDEKTLRTSKRKRSPKADAKQPSIMSMFTKKPAKKEEEKMEESSSMEVDKKEMENGDNGKKEEEEPSGPGGKRIKKEEEEEEKAKVEPMSPSRDLRHKANHETAESKQPPLRCKECRQLLDDPDLKIFPGDPEDAREEYITLTDPRLSLLTGDEGDAMSYDERLQHKITNFCVYDKSTHICAFDRGMIEKNKELYFSGYVKPIYDDNPSTEGGIPTKRIGPINEWYTTGFDGGHKALIGFSTAFAEYIVMSPSEEYKPFWTAVQEKIYMSKILIEFLQNNVDPVYEDLLTQIETTVPPEGCNRFTEDSLLRHAQFVVEQVESYDDAADRDEVLLITMPCMRDLIKLAGVTLGKRRAARKAAAVKKDKKPVFTMATVTPLVSHIFDAIFKDQIADEMKAAASERKKRCGVCEICQAPDCGKCTACKDMIKFGGSGKAKQACKDRRCPNMAVQEADENDIDEMDNSSNKENKDEKKAKKGRKLETPLKKKKRAKVTWLDEPTEVTEERAYYKAAMLDDEKIEIGDCVLIHPDDPTKPLFMARVIYMWQESQGEMMFHAQWFVYGSETVLGETSDPLEVFPIDECQDTYLGSVNAKCTVIYKAPPNDWSMIGGIDDPETDHVIKEDDGKTFFYQKWYDPELARFEDYEVLMAPDDIPAHRFCSCCLKNERAQEKETARPGAKLEDQDDSSKVLYSSWHYKGNEFQIGDGVYLLPEVFSFNIKQKVVTKKPVSKKDVDEDLYPENYRKSSEYVKGSNLECPEPFRIGKIISIYTTKSNSTVRLRVNKMYRPEDTHKGRTAAYQADLNVLYWSEEEAVTELEVVQGKCSVVCAEDLNVSTDEYSAGGPHKFYFREAYDSERKCFEDPPSKSRSTRMKGKGKGKGKGKAKGKIAVEKEEEKESTETPFNKLKCLDVFAGCGGLSEGFHQAGICESSWAIEKEEPAAQAYRLNNPGSTVFSDDCNELLRLVMQGEKTSRTGQKLPQKGDVELLCGGPPCQGFSGMNRFNSREYSKFKNSLISSYLSYCDYYRPRFFLLENVRNFVSYKKNMVLKLALRCLIRMGYQCTFGILQAGQYGVPQTRRRAIILAAAPGEKLPFYPEPLHVFSSRACSLSVMIGEKKIESNNQWCLSAPYRTITVRDTMSDLPTINNGAQKLEISYDGEPQSDFQKKIRGNQYQPILRDHICKDMSSLVAARMKHIPLAPGSDWRDLPNIPVTLKDGTTCRKLRYTHKDKKNGKSSTGALRGVCSCAEGDACDPSDRQFSTLIPWCLPHTGNRHNNWAGLYGRLEWDGFFSTTVTNPEPMGKQGRVLHPEQHRVVSVRECARSQGFPDTYRFFGSILDKHRQIGNAVPPPMAAAIGMEIKVCLQTKTKRDQERAALEPVKEETEESMD.

The DMAP1-binding domain occupies 7–101; the sequence is CDQVIPPNVR…NGDTKEEASS (95 aa). Residues 87–338 form a disordered region; sequence TCSPVNGDTK…TAESKQPPLR (252 aa). The span at 94–110 shows a compositional bias: basic and acidic residues; sequence DTKEEASSNGKDDEKAE. Residues 115-131 are compositionally biased toward low complexity; it reads NGTTSNGSTTNGSSGSS. A compositionally biased stretch (polar residues) spans 132–142; sequence KANGHTNGGYV. Over residues 143 to 154 the composition is skewed to low complexity; it reads QSSSQEETGTSQ. Basic and acidic residues-rich tracts occupy residues 193–212, 222–232, and 260–289; these read VLGDDERDGVEKKEGEKKDV, EESATPDEKTL, and KKEEEKMEESSSMEVDKKEMENGDNGKKEE. A CXXC-type zinc finger spans residues 626-672; it reads ASERKKRCGVCEICQAPDCGKCTACKDMIKFGGSGKAKQACKDRRCP. Residues Cys633, Cys636, Cys639, Cys644, Cys647, Cys650, Cys666, and Cys671 each contribute to the Zn(2+) site. The interval 677-708 is disordered; it reads QEADENDIDEMDNSSNKENKDEKKAKKGRKLE. The segment covering 678-688 has biased composition (acidic residues); the sequence is EADENDIDEMD. Over residues 691–708 the composition is skewed to basic and acidic residues; the sequence is SNKENKDEKKAKKGRKLE. 2 consecutive BAH domains span residues 743–871 and 967–1089; these read EKIE…EDYE and NYRK…EDPP. The segment at 1084–1121 is disordered; sequence CFEDPPSKSRSTRMKGKGKGKGKGKAKGKIAVEKEEEK. Over residues 1093-1111 the composition is skewed to basic residues; sequence RSTRMKGKGKGKGKGKAKG. Residues 1131–1590 form the SAM-dependent MTase C5-type domain; it reads LKCLDVFAGC…MEIKVCLQTK (460 aa). S-adenosyl-L-methionine-binding positions include 1142–1143, 1160–1161, 1182–1183, and Cys1183; these read GL, EK, and DC. The active site involves Cys1218. S-adenosyl-L-methionine is bound by residues Asn1569 and Val1571.

It belongs to the class I-like SAM-binding methyltransferase superfamily. C5-methyltransferase family.

The protein localises to the nucleus. It catalyses the reaction a 2'-deoxycytidine in DNA + S-adenosyl-L-methionine = a 5-methyl-2'-deoxycytidine in DNA + S-adenosyl-L-homocysteine + H(+). In terms of biological role, methylates CpG residues. The polypeptide is DNA (cytosine-5)-methyltransferase PliMCI (DNMT) (Paracentrotus lividus (Common sea urchin)).